The following is a 146-amino-acid chain: Putative pre-16S rRNA nuclease (146 aa).

This sequence belongs to the YqgF nuclease family.

Its subcellular location is the cytoplasm. In terms of biological role, could be a nuclease involved in processing of the 5'-end of pre-16S rRNA. The chain is Putative pre-16S rRNA nuclease from Pediococcus pentosaceus (strain ATCC 25745 / CCUG 21536 / LMG 10740 / 183-1w).